Reading from the N-terminus, the 623-residue chain is tRNA uridine 5-carboxymethylaminomethyl modification enzyme MnmG (623 aa).

FAD contacts are provided by residues 11–16 (GAGHAG), Val-123, and Ser-178. 270–284 (GPRYCPSIETKIVTF) lines the NAD(+) pocket. FAD is bound at residue Gln-367.

It belongs to the MnmG family. Homodimer. Heterotetramer of two MnmE and two MnmG subunits. FAD is required as a cofactor.

Its subcellular location is the cytoplasm. Its function is as follows. NAD-binding protein involved in the addition of a carboxymethylaminomethyl (cmnm) group at the wobble position (U34) of certain tRNAs, forming tRNA-cmnm(5)s(2)U34. The protein is tRNA uridine 5-carboxymethylaminomethyl modification enzyme MnmG of Phocaeicola vulgatus (strain ATCC 8482 / DSM 1447 / JCM 5826 / CCUG 4940 / NBRC 14291 / NCTC 11154) (Bacteroides vulgatus).